The following is a 799-amino-acid chain: Pentatricopeptide repeat-containing protein At2g26790, mitochondrial (799 aa).

The transit peptide at 1 to 27 (MRFSPTFFLLSQLRLTRRRAATSSRFY) directs the protein to the mitochondrion. PPR repeat units follow at residues 145 to 179 (LIRVSGALVKAYVSLGMFDEATDVLFQSKRLDCVV), 180 to 214 (DIKACNFLMNRMTEFGKIGMLMTLFKQLKQLGLCA), 215 to 250 (NEYTYAIVVKALCRKGNLEEAAMLLIENESVFGYKT), 251 to 278 (FINGLCVTGETEKAVALILELIDRKYLA), 282 to 316 (LRAVLGMVVRGFCNEMKMKAAESVIIEMEEIGFGL), 317 to 351 (DVYACLAVIDRYCKNMNLPEALGFLDKMLGKGLKV), 352 to 386 (NCVIVSLILQCYCKMDMCLEALEKFKEFRDMNIFL), 387 to 421 (DRVCYNVAFDALSKLGRVEEAFELLQEMKDRGIVP), 422 to 456 (DVINYTTLIDGYCLQGKVVDALDLIDEMIGNGMSP), 457 to 491 (DLITYNVLVSGLARNGHEEEVLEIYERMKAEGPKP), 492 to 522 (NAVTNSVIIEGLCFARKVKEAEDFFSSLEQK), 523 to 553 (CPENKASFVKGYCEAGLSKKAYKAFVRLEYP), 555 to 589 (RKSVYIKLFFSLCIEGYLEKAHDVLKKMSAYRVEP), 590 to 624 (GRSMCGKMIGAFCKLNNVREAQVLFDTMVERGLIP), 625 to 659 (DLFTYTIMIHTYCRLNELQKAESLFEDMKQRGIKP), 660 to 695 (DVVTYTVLLDRYLKLDPEHHETCSVQGEVGKRKASE), 708 to 742 (DVVCYTVLIDRQCKMNNLEQAAELFDRMIDSGLEP), and 743 to 777 (DMVAYTTLISSYFRKGYIDMAVTLVTELSKKYNIP).

This sequence belongs to the PPR family. P subfamily.

Its subcellular location is the mitochondrion. In Arabidopsis thaliana (Mouse-ear cress), this protein is Pentatricopeptide repeat-containing protein At2g26790, mitochondrial.